The primary structure comprises 378 residues: Signal peptide peptidase (378 aa).

A disordered region spans residues 1–27; that stretch reads MDSAVSDPHNGSAEAGTPANGTTRPPS. Over 1 to 31 the chain is Lumenal; sequence MDSAVSDPHNGSAEAGTPANGTTRPPSTPEG. N-linked (GlcNAc...) asparagine glycans are attached at residues Asn10 and Asn20. A helical transmembrane segment spans residues 32–52; sequence IALAYGSLLLMALLPIFFGAL. The Cytoplasmic portion of the chain corresponds to 53 to 77; it reads RSVRCARGKSSSDMPETITSRDAAR. A helical membrane pass occupies residues 78-98; sequence FPIIASCTLLGLYLFFKIFSQ. The Lumenal segment spans residues 99–100; the sequence is EY. The chain crosses the membrane as a helical span at residues 101 to 121; it reads INLLLSMYFFVLGILALSHTI. Over 122–157 the chain is Cytoplasmic; it reads SPFMNKFFPANFPNRQYQLLFTQGSGENKEEIINYE. A helical membrane pass occupies residues 158-178; sequence FDTKDLVCLGLSSVVGVWYLL. Residues 179 to 181 are Lumenal-facing; it reads RKH. Residues 182 to 202 form a helical membrane-spanning segment; the sequence is WIANNLFGLAFSLNGVELLHL. Over 203 to 209 the chain is Cytoplasmic; the sequence is NNVSTGC. Residues 210–230 traverse the membrane as a helical segment; sequence ILLGGLFIYDIFWVFGTNVMV. Asp219 is an active-site residue. Topologically, residues 231–256 are lumenal; that stretch reads TVAKSFEAPIKLVFPQDLLEKGLEAD. Residues 257-277 traverse the membrane as a helical segment; the sequence is NFAMLGLGDIVIPGIFIALLL. Residue Asp265 is part of the active site. The Cytoplasmic portion of the chain corresponds to 278-290; it reads RFDISLKKNTHTY. The helical transmembrane segment at 291–311 threads the bilayer; that stretch reads FYTSFAAYIFGLGLTIFIMHI. The Lumenal portion of the chain corresponds to 312 to 314; it reads FKH. A helical transmembrane segment spans residues 315-335; sequence AQPALLYLVPACIGFPVLVAL. Positions 317–319 match the PAL motif; that stretch reads PAL. Residues 336 to 378 are Cytoplasmic-facing; it reads AKGEVAEMFSYEESNPKDPAAETESKEESTEASASKRLEKKEK. A disordered region spans residues 346 to 378; it reads YEESNPKDPAAETESKEESTEASASKRLEKKEK. Residues 349–378 show a composition bias toward basic and acidic residues; sequence SNPKDPAAETESKEESTEASASKRLEKKEK. Ser368 carries the post-translational modification Phosphoserine.

The protein belongs to the peptidase A22B family. Monomer. Homodimer. Interacts with RNF139. Interacts with DERL1 and XBP1 isoform 1. As to expression, widely expressed with highest levels in liver and kidney. In the brain, expressed predominantly in hippocampus, amygdala, piriform cortex, choroid plexus and arcuate nucleus of the hypothalamic area. Isoform 1 is more strongly expressed than isoform 4 in most tissues except brain and skeletal muscle where isoform 4 is the dominant isoform and in testis where isoform 1 and isoform 4 are expressed at similar levels. In the brain, isoform 4 is not detected in the choroid plexus.

It is found in the endoplasmic reticulum membrane. It localises to the membrane. Its subcellular location is the cell membrane. Functionally, catalyzes intramembrane proteolysis of signal peptides that have been removed from precursors of secretory and membrane proteins, resulting in the release of the fragment from the ER membrane into the cytoplasm. Required to generate lymphocyte cell surface (HLA-E) epitopes derived from MHC class I signal peptides. Involved in the intramembrane cleavage of the integral membrane protein PSEN1. Cleaves the integral membrane protein XBP1 isoform 1 in a DERL1/RNF139-dependent manner. May play a role in graft rejection. This chain is Signal peptide peptidase, found in Mus musculus (Mouse).